Reading from the N-terminus, the 89-residue chain is Peroxidase (89 aa).

His52 contacts heme. 2 residues coordinate Ca(2+): Thr53 and Asp68.

It depends on heme b as a cofactor. Ca(2+) is required as a cofactor.

It is found in the secreted. It catalyses the reaction 2 a phenolic donor + H2O2 = 2 a phenolic radical donor + 2 H2O. Functionally, removal of H(2)O(2), oxidation of toxic reductants, biosynthesis and degradation of lignin, suberization, auxin catabolism, response to environmental stresses such as wounding, pathogen attack and oxidative stress. These functions might be dependent on each isozyme/isoform in each plant tissue. Active against p-coumaryl alcohol, coniferyl alcohol and coniferyl aldehyde. The sequence is that of Peroxidase from Ginkgo biloba (Ginkgo).